The sequence spans 426 residues: Histidine--tRNA ligase (426 aa).

The protein belongs to the class-II aminoacyl-tRNA synthetase family. In terms of assembly, homodimer.

It localises to the cytoplasm. The catalysed reaction is tRNA(His) + L-histidine + ATP = L-histidyl-tRNA(His) + AMP + diphosphate + H(+). The polypeptide is Histidine--tRNA ligase (Streptococcus thermophilus (strain CNRZ 1066)).